The primary structure comprises 495 residues: Histidine--tRNA ligase (495 aa).

It belongs to the class-II aminoacyl-tRNA synthetase family. In terms of assembly, homodimer.

It is found in the cytoplasm. The catalysed reaction is tRNA(His) + L-histidine + ATP = L-histidyl-tRNA(His) + AMP + diphosphate + H(+). The chain is Histidine--tRNA ligase from Ruegeria pomeroyi (strain ATCC 700808 / DSM 15171 / DSS-3) (Silicibacter pomeroyi).